The primary structure comprises 429 residues: Serine hydroxymethyltransferase (429 aa).

(6S)-5,6,7,8-tetrahydrofolate contacts are provided by residues Leu-126 and 130 to 132; that span reads GHL. N6-(pyridoxal phosphate)lysine is present on Lys-235. A (6S)-5,6,7,8-tetrahydrofolate-binding site is contributed by 359–361; sequence SPF.

Belongs to the SHMT family. In terms of assembly, homodimer. The cofactor is pyridoxal 5'-phosphate.

Its subcellular location is the cytoplasm. The catalysed reaction is (6R)-5,10-methylene-5,6,7,8-tetrahydrofolate + glycine + H2O = (6S)-5,6,7,8-tetrahydrofolate + L-serine. It functions in the pathway one-carbon metabolism; tetrahydrofolate interconversion. Its pathway is amino-acid biosynthesis; glycine biosynthesis; glycine from L-serine: step 1/1. In terms of biological role, catalyzes the reversible interconversion of serine and glycine with tetrahydrofolate (THF) serving as the one-carbon carrier. This reaction serves as the major source of one-carbon groups required for the biosynthesis of purines, thymidylate, methionine, and other important biomolecules. Also exhibits THF-independent aldolase activity toward beta-hydroxyamino acids, producing glycine and aldehydes, via a retro-aldol mechanism. The chain is Serine hydroxymethyltransferase from Prochlorococcus marinus (strain MIT 9313).